The following is a 1128-amino-acid chain: Major DNA-binding protein (1128 aa).

Residues 1104 to 1128 are required for nuclear localization; it reads LGGGGQGSGGRRKRRLATVLPGLEV.

This sequence belongs to the herpesviridae major DNA-binding protein family. Homooligomers. Forms double-helical filaments necessary for the formation of replication compartments within the host nucleus. Interacts with the origin-binding protein. Interacts with the helicase primase complex; this interaction stimulates primer synthesis activity of the helicase-primase complex. Interacts with the DNA polymerase. Interacts with the alkaline exonuclease; this interaction increases its nuclease processivity.

It localises to the virion tegument. The protein resides in the host nucleus. Functionally, plays several crucial roles in viral infection. Participates in the opening of the viral DNA origin to initiate replication by interacting with the origin-binding protein. May disrupt loops, hairpins and other secondary structures present on ssDNA to reduce and eliminate pausing of viral DNA polymerase at specific sites during elongation. Promotes viral DNA recombination by performing strand-transfer, characterized by the ability to transfer a DNA strand from a linear duplex to a complementary single-stranded DNA circle. Can also catalyze the renaturation of complementary single strands. Additionally, reorganizes the host cell nucleus, leading to the formation of prereplicative sites and replication compartments. This process is driven by the protein which can form double-helical filaments in the absence of DNA. The protein is Major DNA-binding protein of Epstein-Barr virus (strain GD1) (HHV-4).